Reading from the N-terminus, the 571-residue chain is Cerebral cavernous malformations 2 protein-like (571 aa).

3 disordered regions span residues 164-193 (AGVD…GTAE), 212-295 (AEAR…PQDP), and 544-571 (LAPD…DNYL). The span at 184–193 (PEKRRVGTAE) shows a compositional bias: basic and acidic residues. The segment covering 212 to 223 (AEARAGGGGGGS) has biased composition (gly residues). The segment covering 237–251 (WERRQTFSGSWERRH) has biased composition (basic and acidic residues). Residues 253-264 (GGGGGGGAGKPG) show a composition bias toward gly residues. Residues 286 to 295 (GPNPLDPQDP) show a composition bias toward pro residues. Residues 545–555 (APDDDDDDEDE) show a composition bias toward acidic residues.

The protein belongs to the CCM2 family.

In Homo sapiens (Human), this protein is Cerebral cavernous malformations 2 protein-like (CCM2L).